The following is a 299-amino-acid chain: Pyridoxal 5'-phosphate synthase subunit PdxS (299 aa).

Aspartate 24 contacts D-ribose 5-phosphate. The active-site Schiff-base intermediate with D-ribose 5-phosphate is the lysine 81. Residue glycine 153 participates in D-ribose 5-phosphate binding. Arginine 165 is a D-glyceraldehyde 3-phosphate binding site. D-ribose 5-phosphate is bound by residues glycine 219 and 240–241; that span reads GS.

It belongs to the PdxS/SNZ family. In terms of assembly, in the presence of PdxT, forms a dodecamer of heterodimers.

It carries out the reaction aldehydo-D-ribose 5-phosphate + D-glyceraldehyde 3-phosphate + L-glutamine = pyridoxal 5'-phosphate + L-glutamate + phosphate + 3 H2O + H(+). It participates in cofactor biosynthesis; pyridoxal 5'-phosphate biosynthesis. In terms of biological role, catalyzes the formation of pyridoxal 5'-phosphate from ribose 5-phosphate (RBP), glyceraldehyde 3-phosphate (G3P) and ammonia. The ammonia is provided by the PdxT subunit. Can also use ribulose 5-phosphate and dihydroxyacetone phosphate as substrates, resulting from enzyme-catalyzed isomerization of RBP and G3P, respectively. The polypeptide is Pyridoxal 5'-phosphate synthase subunit PdxS (Methanococcus vannielii (strain ATCC 35089 / DSM 1224 / JCM 13029 / OCM 148 / SB)).